A 120-amino-acid polypeptide reads, in one-letter code: Small ribosomal subunit protein uS12c (120 aa).

This sequence belongs to the universal ribosomal protein uS12 family. As to quaternary structure, part of the 30S ribosomal subunit.

It localises to the plastid. Its subcellular location is the apicoplast. With S4 and S5 plays an important role in translational accuracy. Located at the interface of the 30S and 50S subunits. The sequence is that of Small ribosomal subunit protein uS12c (rps12) from Eimeria tenella (Coccidian parasite).